Here is a 454-residue protein sequence, read N- to C-terminus: CBL-interacting protein kinase 17 (454 aa).

The Protein kinase domain maps to 13–268 (YEMGRTLGEG…MAGIKSHEWF (256 aa)). Residues 19-27 (LGEGNFGKV) and lysine 42 contribute to the ATP site. Aspartate 136 (proton acceptor) is an active-site residue. The tract at residues 154-183 (DFGLSALPQHLGNDGLLHTTCGSPNYIAPE) is activation loop. The NAF domain maps to 304–328 (KNSHQINAFQLIGMASSLDLSGFFE). The segment at 334-363 (QRRIRFTSTHPPKDAFDKIESSATELGFQV) is PPI.

This sequence belongs to the protein kinase superfamily. CAMK Ser/Thr protein kinase family. SNF1 subfamily. Mn(2+) serves as cofactor.

The enzyme catalyses L-seryl-[protein] + ATP = O-phospho-L-seryl-[protein] + ADP + H(+). The catalysed reaction is L-threonyl-[protein] + ATP = O-phospho-L-threonyl-[protein] + ADP + H(+). CIPK serine-threonine protein kinases interact with CBL proteins. Binding of a CBL protein to the regulatory NAF domain of CIPK protein lead to the activation of the kinase in a calcium-dependent manner. The chain is CBL-interacting protein kinase 17 (CIPK17) from Oryza sativa subsp. japonica (Rice).